Reading from the N-terminus, the 646-residue chain is Peptidylprolyl isomerase domain and WD repeat-containing protein 1 (646 aa).

Residues 1–30 (MAAESGSDFQQRRRRRRDPEEPEKTELSER) form a disordered region. At alanine 2 the chain carries N-acetylalanine. Positions 17–30 (RDPEEPEKTELSER) are enriched in basic and acidic residues. 7 WD repeats span residues 80–118 (ASMY…FWKK), 124–162 (EFVK…VFDV), 168–208 (INML…IYDG), 213–252 (QPLH…YWTG), 271–309 (TDLY…IFRF), 345–386 (AVER…VETN), and 401–453 (MQLA…MFTK). Over residues 455–478 (EPEDTKSADSDRDVFNEKPSKEEV) the composition is skewed to basic and acidic residues. The segment at 455–490 (EPEDTKSADSDRDVFNEKPSKEEVMAATQAEGPKRV) is disordered. The region spanning 490–645 (VSDSAIIHTS…EDVSIINITV (156 aa)) is the PPIase cyclophilin-type domain.

The protein belongs to the cyclophilin-type PPIase family. PPIL1 subfamily. As to quaternary structure, identified in the spliceosome C complex.

The protein localises to the nucleus. The catalysed reaction is [protein]-peptidylproline (omega=180) = [protein]-peptidylproline (omega=0). With respect to regulation, inhibited by cyclosporin A (CsA). PPIase that catalyzes the cis-trans isomerization of proline imidic peptide bonds in oligopeptides and may therefore assist protein folding. May be involved in pre-mRNA splicing. This is Peptidylprolyl isomerase domain and WD repeat-containing protein 1 from Homo sapiens (Human).